The sequence spans 725 residues: Glyoxysomal fatty acid beta-oxidation multifunctional protein MFP-a (725 aa).

It in the N-terminal section; belongs to the enoyl-CoA hydratase/isomerase family. This sequence in the central section; belongs to the 3-hydroxyacyl-CoA dehydrogenase family.

It is found in the glyoxysome. The catalysed reaction is a (3S)-3-hydroxyacyl-CoA = a (2E)-enoyl-CoA + H2O. It carries out the reaction a 4-saturated-(3S)-3-hydroxyacyl-CoA = a (3E)-enoyl-CoA + H2O. The enzyme catalyses a (3Z)-enoyl-CoA = a 4-saturated (2E)-enoyl-CoA. It catalyses the reaction a (3E)-enoyl-CoA = a 4-saturated (2E)-enoyl-CoA. The catalysed reaction is (3S)-3-hydroxybutanoyl-CoA = (3R)-3-hydroxybutanoyl-CoA. It carries out the reaction a (3S)-3-hydroxyacyl-CoA + NAD(+) = a 3-oxoacyl-CoA + NADH + H(+). It participates in lipid metabolism; fatty acid beta-oxidation. This chain is Glyoxysomal fatty acid beta-oxidation multifunctional protein MFP-a, found in Cucumis sativus (Cucumber).